The following is a 197-amino-acid chain: Endonuclease V (197 aa).

Mg(2+)-binding residues include aspartate 37 and glutamate 101.

Belongs to the endonuclease V family. Requires Mg(2+) as cofactor.

Its subcellular location is the cytoplasm. It catalyses the reaction Endonucleolytic cleavage at apurinic or apyrimidinic sites to products with a 5'-phosphate.. Functionally, DNA repair enzyme involved in the repair of deaminated bases. Selectively cleaves double-stranded DNA at the second phosphodiester bond 3' to a deoxyinosine leaving behind the intact lesion on the nicked DNA. This Thermococcus kodakarensis (strain ATCC BAA-918 / JCM 12380 / KOD1) (Pyrococcus kodakaraensis (strain KOD1)) protein is Endonuclease V.